The chain runs to 295 residues: Glycine N-methyltransferase (295 aa).

Ser-4 and Tyr-6 together coordinate (6S)-5-methyl-5,6,7,8-tetrahydrofolate. Position 10 is a phosphoserine (Ser-10). S-adenosyl-L-methionine contacts are provided by Tyr-22, Trp-31, Tyr-34, and Arg-41. Tyr-34 bears the Phosphotyrosine mark. Residue Lys-46 is modified to N6-succinyllysine. S-adenosyl-L-methionine-binding positions include Ala-65, 86–88 (DAS), 117–118 (NW), 139–142 (LGNS), and Arg-178. Lys-193, Lys-198, and Lys-203 each carry N6-succinyllysine. His-217 lines the (6S)-5-methyl-5,6,7,8-tetrahydrofolate pocket. Tyr-223 lines the S-adenosyl-L-methionine pocket. (6S)-5-methyl-5,6,7,8-tetrahydrofolate is bound at residue Arg-242.

It belongs to the class I-like SAM-binding methyltransferase superfamily. Glycine N-methyltransferase family. In terms of assembly, homotetramer. As to expression, abundant in liver.

It localises to the cytoplasm. It carries out the reaction glycine + S-adenosyl-L-methionine = sarcosine + S-adenosyl-L-homocysteine + H(+). Inhibited by 5-methyltetrahydrofolate monoglutamate and by 5-methyltetrahydrofolate pentaglutamate, inhibition is much more effective by the pentaglutamate form than by the monoglutamate form. Two molecules of 5-methyltetrahydrofolate are bound per tetramer. The binding sites are localized between subunits. Inhibitor binding may preclude movements of the polypeptide chain that are necessary for enzyme activity. Its function is as follows. Catalyzes the methylation of glycine by using S-adenosylmethionine (AdoMet) to form N-methylglycine (sarcosine) with the concomitant production of S-adenosylhomocysteine (AdoHcy), a reaction regulated by the binding of 5-methyltetrahydrofolate. Plays an important role in the regulation of methyl group metabolism by regulating the ratio between S-adenosyl-L-methionine and S-adenosyl-L-homocysteine. In Oryctolagus cuniculus (Rabbit), this protein is Glycine N-methyltransferase (GNMT).